We begin with the raw amino-acid sequence, 251 residues long: Cell division protein ZapD (251 aa).

It belongs to the ZapD family. In terms of assembly, interacts with FtsZ.

Its subcellular location is the cytoplasm. Cell division factor that enhances FtsZ-ring assembly. Directly interacts with FtsZ and promotes bundling of FtsZ protofilaments, with a reduction in FtsZ GTPase activity. The sequence is that of Cell division protein ZapD from Burkholderia cenocepacia (strain HI2424).